Consider the following 161-residue polypeptide: Cyclic pyranopterin monophosphate synthase (161 aa).

Residues methionine 75–histidine 77 and methionine 115–glutamate 116 contribute to the substrate site. Aspartate 130 is a catalytic residue.

Belongs to the MoaC family. Homohexamer; trimer of dimers.

It catalyses the reaction (8S)-3',8-cyclo-7,8-dihydroguanosine 5'-triphosphate = cyclic pyranopterin phosphate + diphosphate. It participates in cofactor biosynthesis; molybdopterin biosynthesis. Its function is as follows. Catalyzes the conversion of (8S)-3',8-cyclo-7,8-dihydroguanosine 5'-triphosphate to cyclic pyranopterin monophosphate (cPMP). The polypeptide is Cyclic pyranopterin monophosphate synthase (Bacillus cereus (strain ATCC 10987 / NRS 248)).